The sequence spans 275 residues: Penicillin-insensitive murein endopeptidase (275 aa).

A signal peptide spans 1-19 (MKNWIVGMVALVTMVPVMA). 3 disulfides stabilise this stretch: Cys-44–Cys-264, Cys-187–Cys-235, and Cys-216–Cys-223. His-110, His-113, Asp-120, Asp-147, and His-211 together coordinate Zn(2+). The interval 227–262 (DTPPPGDGCGAELESWFQPPPPSAKPGKTLPPPLPP) is disordered. Residues 244-262 (QPPPPSAKPGKTLPPPLPP) are compositionally biased toward pro residues.

This sequence belongs to the peptidase M74 family. Dimer. The cofactor is Zn(2+).

The protein resides in the periplasm. Functionally, murein endopeptidase that cleaves the D-alanyl-meso-2,6-diamino-pimelyl amide bond that connects peptidoglycan strands. Likely plays a role in the removal of murein from the sacculus. The protein is Penicillin-insensitive murein endopeptidase of Yersinia pestis.